The chain runs to 229 residues: UPF0758 protein Cagg_0777 (229 aa).

Positions 105-227 constitute an MPN domain; that stretch reads PIRSPGDVAA…YVSLRERGIG (123 aa). H176, H178, and D189 together coordinate Zn(2+). The short motif at 176 to 189 is the JAMM motif element; the sequence is HNHPSGEATPSPED.

This sequence belongs to the UPF0758 family.

This chain is UPF0758 protein Cagg_0777, found in Chloroflexus aggregans (strain MD-66 / DSM 9485).